The chain runs to 165 residues: Transcriptional repressor NrdR (165 aa).

Residues 3–34 fold into a zinc finger; that stretch reads CPFCRHPDSRVVDSREADEGQAIRRRRSCPEC. The ATP-cone domain occupies 46–136; that stretch reads LSVVKRSGVT…VYKSFSSAAD (91 aa).

It belongs to the NrdR family. Zn(2+) is required as a cofactor.

Its function is as follows. Negatively regulates transcription of bacterial ribonucleotide reductase nrd genes and operons by binding to NrdR-boxes. The polypeptide is Transcriptional repressor NrdR (Rhodococcus erythropolis (strain PR4 / NBRC 100887)).